The following is a 798-amino-acid chain: Cation channel sperm-associated auxiliary subunit delta (798 aa).

Residues 1 to 20 (MLMLMLVAAVTMWLRPLVTA) form the signal peptide. Residues 21–723 (QLCRSRTVRT…AFPVQLVSAG (703 aa)) lie on the Extracellular side of the membrane. 7 disulfide bridges follow: cysteine 23-cysteine 369, cysteine 59-cysteine 145, cysteine 144-cysteine 152, cysteine 387-cysteine 496, cysteine 510-cysteine 701, cysteine 525-cysteine 572, and cysteine 624-cysteine 652. Asparagine 123 carries N-linked (GlcNAc...) asparagine glycosylation. Asparagine 230, asparagine 240, asparagine 472, asparagine 538, and asparagine 630 each carry an N-linked (GlcNAc...) asparagine glycan. Residues 724–745 (VVILLIISSILGSVWLAYKTPK) traverse the membrane as a helical segment. The Cytoplasmic segment spans residues 746 to 798 (LLRTARGRRIKKCATQLCRRCKTVCQFRASATARAGTEPPGRHRTPHGGRSDH).

It belongs to the CATSPERD family. Component of the CatSper complex or CatSpermasome composed of the core pore-forming members CATSPER1, CATSPER2, CATSPER3 and CATSPER4 as well as auxiliary members CATSPERB, CATSPERG, CATSPERD, CATSPERE, CATSPERZ, C2CD6/CATSPERT, TMEM249, TMEM262 and EFCAB9. HSPA1 may be an additional auxiliary complex member. The core complex members CATSPER1, CATSPER2, CATSPER3 and CATSPER4 form a heterotetrameric channel. The auxiliary CATSPERB, CATSPERG, CATSPERD and CATSPERE subunits form a pavilion-like structure over the pore which stabilizes the complex through interactions with CATSPER4, CATSPER3, CATSPER1 and CATSPER2 respectively. TMEM262/CATSPERH interacts with CATSPERB, further stabilizing the complex. C2CD6/CATSPERT interacts at least with CATSPERD and is required for targeting the CatSper complex in the flagellar membrane.

The protein localises to the cell projection. The protein resides in the cilium. It is found in the flagellum membrane. Its function is as follows. Auxiliary component of the CatSper complex, a complex involved in sperm cell hyperactivation. Sperm cell hyperactivation is needed for sperm motility which is essential late in the preparation of sperm for fertilization. Required for CATSPER1 stability before intraflagellar transport and/or incorporation of the CatSper complex channel into the flagellar membrane. This Homo sapiens (Human) protein is Cation channel sperm-associated auxiliary subunit delta.